The sequence spans 197 residues: Imidazoleglycerol-phosphate dehydratase (197 aa).

The protein belongs to the imidazoleglycerol-phosphate dehydratase family.

Its subcellular location is the cytoplasm. It carries out the reaction D-erythro-1-(imidazol-4-yl)glycerol 3-phosphate = 3-(imidazol-4-yl)-2-oxopropyl phosphate + H2O. The protein operates within amino-acid biosynthesis; L-histidine biosynthesis; L-histidine from 5-phospho-alpha-D-ribose 1-diphosphate: step 6/9. The sequence is that of Imidazoleglycerol-phosphate dehydratase from Clostridium acetobutylicum (strain ATCC 824 / DSM 792 / JCM 1419 / IAM 19013 / LMG 5710 / NBRC 13948 / NRRL B-527 / VKM B-1787 / 2291 / W).